We begin with the raw amino-acid sequence, 129 residues long: Large ribosomal subunit protein bL12 (129 aa).

This sequence belongs to the bacterial ribosomal protein bL12 family. As to quaternary structure, homodimer. Part of the ribosomal stalk of the 50S ribosomal subunit. Forms a multimeric L10(L12)X complex, where L10 forms an elongated spine to which 2 to 4 L12 dimers bind in a sequential fashion. Binds GTP-bound translation factors.

Forms part of the ribosomal stalk which helps the ribosome interact with GTP-bound translation factors. Is thus essential for accurate translation. This chain is Large ribosomal subunit protein bL12, found in Pelotomaculum thermopropionicum (strain DSM 13744 / JCM 10971 / SI).